The following is a 397-amino-acid chain: 2,3,4,5-tetrahydropyridine-2,6-dicarboxylate N-succinyltransferase (397 aa).

Glu-265 serves as the catalytic Acyl-anhydride intermediate. Succinyl-CoA-binding positions include Arg-267, Gly-282, Ser-285, Ala-308, 323-324, Gly-331, Lys-360, and 373-376; these read DA and RQNS.

The protein belongs to the type 2 tetrahydrodipicolinate N-succinyltransferase family. As to quaternary structure, homotrimer.

The protein resides in the cytoplasm. It catalyses the reaction (S)-2,3,4,5-tetrahydrodipicolinate + succinyl-CoA + H2O = (S)-2-succinylamino-6-oxoheptanedioate + CoA. It participates in amino-acid biosynthesis; L-lysine biosynthesis via DAP pathway; LL-2,6-diaminopimelate from (S)-tetrahydrodipicolinate (succinylase route): step 1/3. Catalyzes the conversion of the cyclic tetrahydrodipicolinate (THDP) into the acyclic N-succinyl-L-2-amino-6-oxopimelate using succinyl-CoA. The chain is 2,3,4,5-tetrahydropyridine-2,6-dicarboxylate N-succinyltransferase from Sulfurovum sp. (strain NBC37-1).